The sequence spans 468 residues: MSDISKVFDLIKEHDVKYVDLRFTDPRGKLHHTAQHVSTIDEDVFEDGIMFDGSSIAGWKAINESDMILQLDPTTAVMDPFSAQPTLNILCDVYEPSTGQPYARCPRGIAKAAEKYMASAGIADTAYFGPEAEFFVFDDVKFKVEMNKVSYEFDSEEGPYTSDKDYEDGNLGHRPGVKGGYFPVAPVDSGSDLRAEMLSVLAEMGVPVEKHHHEVAASQHELGIKFDTLVRTGDNMQYYKYVVHNVAHAYGKTATFMPKPVFGDNGSGMHMHQSIWKEGQPLFAGNQYADLSELALYYIGGIIKHAKALNAFTNPTTNSYKRLVPGYEAPVLLAYSARNRSASCRIPYVASPKGKRVEVRFPDPSANPYLAFAALLMAGLDGIQNKIHPGEAMDKNLYDLPAEELAKVPTVCGSREALDSLKADSAFLQKGDVFTKDMIESYIDLRTEELLAFETMPHPIEYKMYYSV.

Residues 14–98 (HDVKYVDLRF…ILCDVYEPST (85 aa)) enclose the GS beta-grasp domain. The 363-residue stretch at 106-468 (PRGIAKAAEK…PIEYKMYYSV (363 aa)) folds into the GS catalytic domain. Positions 131 and 133 each coordinate Mg(2+). Residue glutamate 209 coordinates ATP. Mg(2+) contacts are provided by glutamate 214 and glutamate 221. L-glutamate contacts are provided by residues 265 to 266 (NG) and glycine 266. Residue histidine 270 coordinates Mg(2+). ATP is bound by residues 272 to 274 (HQS) and serine 274. The L-glutamate site is built by arginine 322, glutamate 328, and arginine 340. Residues arginine 340, arginine 345, and lysine 353 each coordinate ATP. Glutamate 358 is a Mg(2+) binding site. Residue arginine 360 participates in L-glutamate binding. Tyrosine 398 carries the post-translational modification O-AMP-tyrosine.

It belongs to the glutamine synthetase family. Oligomer of 12 subunits arranged in the form of two hexameric ring. The cofactor is Mg(2+).

The protein localises to the cytoplasm. The enzyme catalyses L-glutamate + NH4(+) + ATP = L-glutamine + ADP + phosphate + H(+). Its activity is regulated as follows. The activity of this enzyme could be controlled by adenylation under conditions of abundant glutamine. Its function is as follows. Catalyzes the ATP-dependent biosynthesis of glutamine from glutamate and ammonia. This Azospirillum brasilense protein is Glutamine synthetase.